Reading from the N-terminus, the 85-residue chain is MAHKKAGGSTRNGRDSEGKRLGVKRFGGEKVLAGTIIVRQRGTKFHPGVNVGCGKDHTLFALSHGKVKFEVKGTKNRSFVSIETE.

The segment at 1-21 (MAHKKAGGSTRNGRDSEGKRL) is disordered.

The protein belongs to the bacterial ribosomal protein bL27 family.

The polypeptide is Large ribosomal subunit protein bL27 (Hamiltonella defensa subsp. Acyrthosiphon pisum (strain 5AT)).